The chain runs to 351 residues: Protein arginine N-methyltransferase 1 (351 aa).

Residues 30–331 (KDYYFDSYAH…KNNRDLDFTV (302 aa)) form the SAM-dependent MTase PRMT-type domain. S-adenosyl-L-methionine contacts are provided by histidine 43, arginine 52, glycine 76, glutamate 98, and glutamate 127. Catalysis depends on residues glutamate 142 and glutamate 151.

Belongs to the class I-like SAM-binding methyltransferase superfamily. Protein arginine N-methyltransferase family. In terms of assembly, homodimer. Homooctamer; individual homodimers associates to form a homooctamer and homooligomerization is required for proper localization to the cell membrane. Individual homodimers can associate to form a homohexamer. Component of a complex with lsm14a/rap55a. Interacts with cirbp.

Its subcellular location is the nucleus. The protein localises to the nucleoplasm. It localises to the cytoplasm. The protein resides in the cytosol. The catalysed reaction is L-arginyl-[protein] + 2 S-adenosyl-L-methionine = N(omega),N(omega)-dimethyl-L-arginyl-[protein] + 2 S-adenosyl-L-homocysteine + 2 H(+). The enzyme catalyses L-arginyl-[protein] + S-adenosyl-L-methionine = N(omega)-methyl-L-arginyl-[protein] + S-adenosyl-L-homocysteine + H(+). It carries out the reaction N(omega)-methyl-L-arginyl-[protein] + S-adenosyl-L-methionine = N(omega),N(omega)-dimethyl-L-arginyl-[protein] + S-adenosyl-L-homocysteine + H(+). Arginine methyltransferase that methylates (mono and asymmetric dimethylation) the guanidino nitrogens of arginyl residues present in target proteins. Constitutes the main enzyme that mediates monomethylation and asymmetric dimethylation of histone H4 'Arg-3' (H4R3me1 and H4R3me2a, respectively), a specific tag for epigenetic transcriptional activation. Methylates ilf3 to regulate its DNA-binding activity. Required for neural induction, playing a key role in the control of epidermal versus neural cell fate choice. Methylates cirbp to regulate its subcellular location. Acts transiently during metamorphosis as a transcription coactivator, enhancing thyroid hormone (T3) receptor (TR)-mediated transcription by enhancing TR binding to the T3 response element (TRE), and histone modification through recruitment of other coactivators. The chain is Protein arginine N-methyltransferase 1 from Xenopus tropicalis (Western clawed frog).